Here is an 882-residue protein sequence, read N- to C-terminus: Putative HTH-type transcriptional regulator Rv0890c (882 aa).

The HTH luxR-type domain occupies 814 to 879; the sequence is PARGWGSLTP…QLVDEAARRG (66 aa). Positions 838–857 form a DNA-binding region, H-T-H motif; the sequence is NKDIAKRLFVSPRTVQTHLT.

This is Putative HTH-type transcriptional regulator Rv0890c from Mycobacterium tuberculosis (strain ATCC 25618 / H37Rv).